The following is a 777-amino-acid chain: Subtilisin-like protease SBT3.3 (777 aa).

An N-terminal signal peptide occupies residues 1–24 (MRSFRSSILLVLLSLITVLNATRA). Residues 25-111 (RSETESKVHI…VIPDGFHELA (87 aa)) constitute a propeptide, removed in mature form. Residues 32 to 109 (VHIVYLGEKK…VHVIPDGFHE (78 aa)) enclose the Inhibitor I9 domain. A Peptidase S8 domain is found at 115–624 (TWEYLGLSSA…GGIVNPEKAA (510 aa)). Residue Asn-131 is glycosylated (N-linked (GlcNAc...) asparagine). The active-site Charge relay system is Asp-145. The N-linked (GlcNAc...) asparagine glycan is linked to Asn-204. His-220 functions as the Charge relay system in the catalytic mechanism. Asn-235, Asn-397, Asn-412, Asn-508, and Asn-540 each carry an N-linked (GlcNAc...) asparagine glycan. One can recognise a PA domain in the interval 403-481 (VCESLNLNPN…ELGTDILSYI (79 aa)). Ser-555 serves as the catalytic Charge relay system. Asn-647 carries N-linked (GlcNAc...) asparagine glycosylation.

Belongs to the peptidase S8 family.

The protein localises to the secreted. It is found in the extracellular space. It localises to the extracellular matrix. Its function is as follows. Serine protease that plays a role in the control of the establishment of immune priming and systemic induced resistance. This chain is Subtilisin-like protease SBT3.3, found in Arabidopsis thaliana (Mouse-ear cress).